The primary structure comprises 471 residues: Coagulation factor IX (471 aa).

The first 28 residues, 1–28 (MKHLNTVMAESPALITIFLLGYLLSTEC), serve as a signal peptide directing secretion. Positions 29–46 (AVFLDRENATKILTRPKR) are excised as a propeptide. Positions 47, 48, 53, 54, 61, 63, 66, 67, 72, 73, and 76 each coordinate Ca(2+). The Gla domain occupies 47–92 (YNSGKLEEFVRGNLERECIEERCSFEEAREVFENTEKTTEFWKQYV). E53, E54, E61, E63, E66, E67, E72, E73, E76, E79, and E82 each carry 4-carboxyglutamate. E61 contacts Mg(2+). The cysteines at positions 64 and 69 are disulfide-linked. E66 is a binding site for Mg(2+). E72 serves as a coordination point for Mg(2+). A Mg(2+)-binding site is contributed by E76. E82 contributes to the Ca(2+) binding site. Mg(2+) is bound at residue E82. The O-linked (GalNAc...) threonine glycan is linked to T85. Ca(2+) is bound by residues E86, D93, G94, and Q96. Residue E86 is modified to 4-carboxyglutamate. E86 serves as a coordination point for Mg(2+). Residues 93–129 (DGDQCESNPCLNGGICKDDISSYECWCQVGFEGRNCE) enclose the EGF-like 1; calcium-binding domain. Cystine bridges form between C97–C108, C102–C117, C119–C128, C134–C145, C141–C155, C157–C170, C178–C345, C262–C278, C392–C406, and C417–C445. A glycan (O-linked (Glc...) serine) is linked at S99. 2 residues coordinate Ca(2+): D110 and D111. At D110 the chain carries (3R)-3-hydroxyaspartate. A Phosphoserine modification is found at S114. The 42-residue stretch at 130-171 (LDATCNIKNGRCKQFCKNSPDNKVICSCTEGYQLAEDQKSCE) folds into the EGF-like 2 domain. The propeptide at 193 to 236 (AETVFSNMDYENSTEAVFIQDDITDGAILNNVTESSESLNDFTR) is activation peptide. Residue Y202 is modified to Sulfotyrosine. Residue N204 is glycosylated (N-linked (GlcNAc...) asparagine). Residue S205 is modified to Phosphoserine. T206 is subject to Phosphothreonine; alternate. O-linked (GalNAc...) threonine; alternate glycosylation is present at T206. N223 carries N-linked (GlcNAc...) asparagine glycosylation. 2 O-linked (GalNAc...) threonine glycosylation sites follow: T225 and T235. The region spanning 237–469 (VVGGENAKPG…YVNWIKEKTK (233 aa)) is the Peptidase S1 domain. H277 serves as the catalytic Charge relay system. Residues E291, N293, E298, and E301 each contribute to the Ca(2+) site. D325 serves as the catalytic Charge relay system. The Charge relay system role is filled by S421.

Belongs to the peptidase S1 family. As to quaternary structure, heterodimer of a light chain and a heavy chain; disulfide-linked. Interacts (inactive and activated) with F11 (activated) in calcium-dependent manner. Interacts with SERPINC1. In terms of processing, activated by factor XIa, which excises the activation peptide. The propeptide can also be removed by snake venom protease. Activated by coagulation factor VIIa-tissue factor (F7-F3) complex in calcium-dependent manner. The iron and 2-oxoglutarate dependent 3-hydroxylation of aspartate and asparagine is (R) stereospecific within EGF domains. Post-translationally, predominantly O-glucosylated at Ser-99 by POGLUT1 in vitro. Detected in liver.

The protein localises to the secreted. The enzyme catalyses Selective cleavage of Arg-|-Ile bond in factor X to form factor Xa.. Functionally, factor IX is a vitamin K-dependent plasma protein that participates in the intrinsic pathway of blood coagulation by converting factor X to its active form in the presence of Ca(2+) ions, phospholipids, and factor VIIIa. In Mus musculus (Mouse), this protein is Coagulation factor IX (F9).